We begin with the raw amino-acid sequence, 221 residues long: Deoxyribose-phosphate aldolase (221 aa).

Aspartate 89 functions as the Proton donor/acceptor in the catalytic mechanism. Catalysis depends on lysine 151, which acts as the Schiff-base intermediate with acetaldehyde. The active-site Proton donor/acceptor is lysine 180.

The protein belongs to the DeoC/FbaB aldolase family. DeoC type 1 subfamily.

It localises to the cytoplasm. It catalyses the reaction 2-deoxy-D-ribose 5-phosphate = D-glyceraldehyde 3-phosphate + acetaldehyde. It participates in carbohydrate degradation; 2-deoxy-D-ribose 1-phosphate degradation; D-glyceraldehyde 3-phosphate and acetaldehyde from 2-deoxy-alpha-D-ribose 1-phosphate: step 2/2. Catalyzes a reversible aldol reaction between acetaldehyde and D-glyceraldehyde 3-phosphate to generate 2-deoxy-D-ribose 5-phosphate. This Mesomycoplasma hyopneumoniae (strain 232) (Mycoplasma hyopneumoniae) protein is Deoxyribose-phosphate aldolase.